The chain runs to 447 residues: uncharacterized protein (447 aa).

The interval 39–76 (PQAAPYTRNNGMGECRRGHRQGHRAEVHDNRPADKVGQ) is disordered. The segment covering 61–72 (HRAEVHDNRPAD) has biased composition (basic and acidic residues).

The protein belongs to the 3-oxoacid CoA-transferase subunit A family.

This is an uncharacterized protein from Archaeoglobus fulgidus (strain ATCC 49558 / DSM 4304 / JCM 9628 / NBRC 100126 / VC-16).